Reading from the N-terminus, the 138-residue chain is Acidic phospholipase A2 BmooPLA2 (138 aa).

An N-terminal signal peptide occupies residues 1–16; sequence MRTLWIVAVLLLGVEG. Cystine bridges form between cysteine 42-cysteine 131, cysteine 44-cysteine 60, cysteine 59-cysteine 111, cysteine 65-cysteine 138, cysteine 66-cysteine 104, cysteine 73-cysteine 97, and cysteine 91-cysteine 102. 3 residues coordinate Ca(2+): tyrosine 43, glycine 45, and glycine 47. Residue histidine 63 is part of the active site. Aspartate 64 contacts Ca(2+). Residue aspartate 105 is part of the active site.

This sequence belongs to the phospholipase A2 family. Group II subfamily. D49 sub-subfamily. Ca(2+) is required as a cofactor. Expressed by the venom gland.

It is found in the secreted. It carries out the reaction a 1,2-diacyl-sn-glycero-3-phosphocholine + H2O = a 1-acyl-sn-glycero-3-phosphocholine + a fatty acid + H(+). Snake venom phospholipase A2 (PLA2) that inhibits ADP- and collagen-induced platelet aggregation, has edema-inducing, anti-coagulant activity, antibacterial activity, and cytotoxic activity. In vivo, has a hypotensive effect. PLA2 catalyzes the calcium-dependent hydrolysis of the 2-acyl groups in 3-sn-phosphoglycerides. The chain is Acidic phospholipase A2 BmooPLA2 from Bothrops moojeni (Lance-headed viper).